A 397-amino-acid chain; its full sequence is Major outer membrane porin, serovar C (397 aa).

The first 22 residues, M1–A22, serve as a signal peptide directing secretion.

Belongs to the chlamydial porin (CP) (TC 1.B.2) family. In terms of assembly, part of a disulfide cross-linked outer membrane complex (COMC) composed of the major outer membrane porin (MOMP), the small cysteine-rich protein (OmcA) and the large cysteine-rich periplasmic protein (OmcB).

The protein localises to the cell outer membrane. In terms of biological role, in elementary bodies (EBs, the infectious stage, which is able to survive outside the host cell) provides the structural integrity of the outer envelope through disulfide cross-links with the small cysteine-rich protein and the large cysteine-rich periplasmic protein. It has been described in publications as the Sarkosyl-insoluble COMC (Chlamydia outer membrane complex), and serves as the functional equivalent of peptidoglycan. Permits diffusion of specific solutes through the outer membrane. The chain is Major outer membrane porin, serovar C (ompA) from Chlamydia trachomatis.